A 287-amino-acid polypeptide reads, in one-letter code: Inorganic pyrophosphatase (287 aa).

Thr65 is modified (phosphothreonine). Arg79 serves as a coordination point for diphosphate. The active-site Proton donor is Tyr90. Mg(2+) contacts are provided by Asp116, Asp121, and Asp153. Lys239 is covalently cross-linked (Glycyl lysine isopeptide (Lys-Gly) (interchain with G-Cter in ubiquitin)). Residue Thr251 is modified to Phosphothreonine. At Ser266 the chain carries Phosphoserine. A Glycyl lysine isopeptide (Lys-Gly) (interchain with G-Cter in ubiquitin) cross-link involves residue Lys279. The residue at position 286 (Ser286) is a Phosphoserine.

It belongs to the PPase family. In terms of assembly, homodimer. Requires Mg(2+) as cofactor.

Its subcellular location is the cytoplasm. The catalysed reaction is diphosphate + H2O = 2 phosphate + H(+). In Saccharomyces cerevisiae (strain ATCC 204508 / S288c) (Baker's yeast), this protein is Inorganic pyrophosphatase (IPP1).